The chain runs to 283 residues: Chromatin modification-related protein png1 (283 aa).

A compositionally biased stretch (low complexity) spans 137 to 171; that stretch reads YSPSGASSARQTPAPSRSGASTAGRRRTSATTRGA. Positions 137–224 are disordered; that stretch reads YSPSGASSAR…NEMVSEEDME (88 aa). Over residues 181-216 the composition is skewed to polar residues; it reads YTASLADSGSTRGQKVSNATATTQLETKADSTTPNE. A PHD-type zinc finger spans residues 228–277; the sequence is EKYCFCQQGSYGQMVACDNANCEREWFHMECVGLKAPPEGTWYCEACRDQ. The Zn(2+) site is built by Cys231, Cys233, Cys244, Cys249, His255, Cys258, Cys271, and Cys274.

It belongs to the ING family. In terms of assembly, interacts with H3K4me3 and to a lesser extent with H3K4me2. Component of a histone deacetylase complex.

It localises to the nucleus. In terms of biological role, component of a histone deacetylase complex responsible for the deacetylation of lysine residues on the N-terminal part of the core histones (H2A, H2B, H3 and H4). Histone deacetylation gives a tag for epigenetic repression and plays an important role in transcriptional regulation, cell cycle progression and developmental events. Has a role in silencing of mating type genes. The protein is Chromatin modification-related protein png1 (png1) of Schizosaccharomyces pombe (strain 972 / ATCC 24843) (Fission yeast).